The chain runs to 61 residues: Large ribosomal subunit protein bL28 (61 aa).

The protein belongs to the bacterial ribosomal protein bL28 family.

The chain is Large ribosomal subunit protein bL28 from Nocardioides sp. (strain ATCC BAA-499 / JS614).